Consider the following 703-residue polypeptide: Polyribonucleotide nucleotidyltransferase (703 aa).

Asp484 and Asp490 together coordinate Mg(2+). The region spanning 551 to 610 (PQMIRMQIDPDKIREVIGPGGKTIHKIVDETGCKIDIEDDGSLFIMATDEEAAKKARFFV) is the KH domain. Positions 620-694 (GKTYMGTVKR…RQGRVNLSRK (75 aa)) constitute an S1 motif domain.

It belongs to the polyribonucleotide nucleotidyltransferase family. Mg(2+) is required as a cofactor.

It localises to the cytoplasm. The enzyme catalyses RNA(n+1) + phosphate = RNA(n) + a ribonucleoside 5'-diphosphate. Involved in mRNA degradation. Catalyzes the phosphorolysis of single-stranded polyribonucleotides processively in the 3'- to 5'-direction. This Syntrophomonas wolfei subsp. wolfei (strain DSM 2245B / Goettingen) protein is Polyribonucleotide nucleotidyltransferase.